Here is an 83-residue protein sequence, read N- to C-terminus: Kunitz-type serine protease inhibitor vestiginin-3 (83 aa).

The first 24 residues, 1-24, serve as a signal peptide directing secretion; sequence MSSGGLLLLLGLLTLWAELTPVSS. Residues 31 to 81 form the BPTI/Kunitz inhibitor domain; sequence CKLPKEPGPCRSYLLYFYYNSVEHKCQTFHYGGCEGNENRFHTIEECKSTC. Disulfide bonds link C31-C81, C40-C64, and C56-C77.

Belongs to the venom Kunitz-type family. As to expression, expressed by the venom gland.

It is found in the secreted. Its function is as follows. Serine protease inhibitor. The chain is Kunitz-type serine protease inhibitor vestiginin-3 from Demansia vestigiata (Lesser black whip snake).